We begin with the raw amino-acid sequence, 429 residues long: Lysophosphatidic acid phosphatase type 6 (429 aa).

Residues 1-32 (MISRVFKLRMWAPVGVLTSLTYCLHQRRVALA) constitute a mitochondrion transit peptide. Residues 58-169 (RHGARSPLKP…VFIRSTNIYR (112 aa)) are substrate binding. Residue histidine 59 is the Nucleophile of the active site. Aspartate 336 (proton donor) is an active-site residue.

This sequence belongs to the histidine acid phosphatase family. In terms of assembly, monomer. In terms of tissue distribution, detected in brain (at protein level).

The protein resides in the mitochondrion. The enzyme catalyses a phosphate monoester + H2O = an alcohol + phosphate. It catalyses the reaction 1-(9Z-octadecenoyl)-sn-glycero-3-phosphate + H2O = 1-(9Z-octadecenoyl)-sn-glycerol + phosphate. Its function is as follows. Hydrolyzes lysophosphatidic acid (LPA) containing a medium length fatty acid chain to the corresponding monoacylglycerol. Has highest activity with lysophosphatidic acid containing myristate (C14:0), monounsaturated oleate (C18:1) or palmitate (C16:0), and lower activity with C18:0 and C6:0 lysophosphatidic acid. This chain is Lysophosphatidic acid phosphatase type 6 (ACP6), found in Bos taurus (Bovine).